Here is a 391-residue protein sequence, read N- to C-terminus: Phosphoglycerate kinase (391 aa).

Residues 21–23, Arg36, 59–62, Arg113, and Arg146 each bind substrate; these read DLN and HLGR. ATP-binding positions include Lys197, Glu319, and 345-348; that span reads GGDT.

The protein belongs to the phosphoglycerate kinase family. In terms of assembly, monomer.

Its subcellular location is the cytoplasm. The catalysed reaction is (2R)-3-phosphoglycerate + ATP = (2R)-3-phospho-glyceroyl phosphate + ADP. It participates in carbohydrate degradation; glycolysis; pyruvate from D-glyceraldehyde 3-phosphate: step 2/5. The sequence is that of Phosphoglycerate kinase from Shewanella putrefaciens (strain CN-32 / ATCC BAA-453).